The chain runs to 148 residues: SPbeta prophage-derived uncharacterized protein YomK (148 aa).

A run of 2 helical transmembrane segments spans residues 72–92 (WGIGSLILGTSFIGFQVLFGV) and 104–124 (NALIYVLITIIICLWTLRNII).

Its subcellular location is the cell membrane. This chain is SPbeta prophage-derived uncharacterized protein YomK (yomK), found in Bacillus subtilis (strain 168).